Consider the following 193-residue polypeptide: MVVNKTTAVLYLIALSLSGFIHTFLRAEERGIYDDVFTADALRHYRINERGGRTGSLTCSGALLSSPCTLVSNEVPLSLRPENHSAAAGAPLMLRLAGCGDGGALQPGKRGVAMTVSGSLVTGPGSGSALLPDRKLSGCDHLVIHDGDTFLLCRPDRRQEEMLAAWRKRATQEGEYSDARSNPAMLRLSIKYE.

Positions 1–27 (MVVNKTTAVLYLIALSLSGFIHTFLRA) are cleaved as a signal peptide.

The protein resides in the periplasm. In terms of biological role, this protein maintains pilus integrity and thus is an important participant in pilus assembly. It may function as molecular chaperone directly or indirectly in the correct assembly of PapA subunits. The sequence is that of Protein PapJ (papJ) from Escherichia coli.